Reading from the N-terminus, the 822-residue chain is Fibroblast growth factor receptor 1 (822 aa).

The first 21 residues, 1 to 21 (MWSWKCLLFWAVLVTATLCTA), serve as a signal peptide directing secretion. The Extracellular segment spans residues 22–376 (RPSPTLPEQA…AVMTSPLYLE (355 aa)). Residues 25–119 (PTLPEQAQPW…DTTYFSVNVS (95 aa)) enclose the Ig-like C2-type 1 domain. A disulfide bridge connects residues Cys55 and Cys101. N-linked (GlcNAc...) asparagine glycosylation is found at Asn77 and Asn117. The segment at 120 to 154 (DALPSSEDDDDDDDSSSEEKETDNTKPNRMPVAPY) is disordered. Over residues 125–135 (SEDDDDDDDSS) the composition is skewed to acidic residues. Residues 136–145 (SEEKETDNTK) show a composition bias toward basic and acidic residues. Ig-like C2-type domains lie at 158 to 246 (PEKM…YQLD) and 255 to 357 (PILQ…AWLT). The segment at 160-177 (KMEKKLHAVPAAKTVKFK) is heparin-binding. An intrachain disulfide couples Cys178 to Cys230. Asn227, Asn240, Asn264, Asn296, Asn317, and Asn330 each carry an N-linked (GlcNAc...) asparagine glycan. A disulfide bridge connects residues Cys277 and Cys341. A helical membrane pass occupies residues 377-397 (IIIYCTGAFLISCMVGSVIVY). Topologically, residues 398-822 (KMKSGTKKSD…QLANGGLKRR (425 aa)) are cytoplasmic. Phosphotyrosine; by autocatalysis is present on Tyr463. Positions 478-767 (LVLGKPLGEG…VALTSNQEYL (290 aa)) constitute a Protein kinase domain. ATP-binding positions include 484-490 (LGEGCFG), Lys514, 562-564 (EYA), and Asn568. Residues Tyr583 and Tyr585 each carry the phosphotyrosine; by autocatalysis modification. Residue Asp623 is the Proton acceptor of the active site. Residues Arg627 and Asp641 each contribute to the ATP site. Phosphotyrosine; by autocatalysis occurs at positions 653, 654, 730, and 766. Positions 778–792 (PSFPDTRSSTCSSGE) are enriched in polar residues. A disordered region spans residues 778-822 (PSFPDTRSSTCSSGEDSVFSHEPLPEEPCLPRHPAQLANGGLKRR).

This sequence belongs to the protein kinase superfamily. Tyr protein kinase family. Fibroblast growth factor receptor subfamily. Monomer. Homodimer after ligand binding. Interacts predominantly with FGF1 and FGF2, but can also interact with FGF3, FGF4, FGF5, FGF6, FGF8, FGF10, FGF19, FGF21, FGF22 and FGF23 (in vitro). Ligand specificity is determined by tissue-specific expression of isoforms, and differences in the third Ig-like domain are crucial for ligand specificity. Affinity for fibroblast growth factors (FGFs) is increased by heparan sulfate glycosaminoglycans that function as coreceptors. Likewise, KLB increases the affinity for FGF19, FGF21 and FGF23. Interacts (phosphorylated on Tyr-766) with PLCG1 (via SH2 domains). Interacts with FRS2. Interacts with RPS6KA1. Interacts (via C-terminus) with NEDD4 (via WW3 domain). Interacts with KL. Interacts with SHB (via SH2 domain). Interacts with GRB10. Interacts with ANOS1; this interaction does not interfere with FGF2-binding to FGFR1, but prevents binding of heparin-bound FGF2. Interacts with SOX2 and SOX3. Interacts with FLRT1, FLRT2 and FLRT3. Found in a ternary complex with FGF1 and ITGAV:ITGB3. Autophosphorylated. Binding of FGF family members together with heparan sulfate proteoglycan or heparin promotes receptor dimerization and autophosphorylation on tyrosine residues. Autophosphorylation occurs in trans between the two FGFR molecules present in the dimer and proceeds in a highly ordered manner. Initial autophosphorylation at Tyr-653 increases the kinase activity by a factor of 50 to 100. After this, Tyr-583 becomes phosphorylated, followed by phosphorylation of Tyr-463, Tyr-766, Tyr-583 and Tyr-585. In a third stage, Tyr-654 is autophosphorylated, resulting in a further tenfold increase of kinase activity. Phosphotyrosine residues provide docking sites for interacting proteins and so are crucial for FGFR1 function and its regulation. In terms of processing, ubiquitinated. FGFR1 is rapidly ubiquitinated by NEDD4 after autophosphorylation, leading to internalization and lysosomal degradation. CBL is recruited to activated FGFR1 via FRS2 and GRB2, and mediates ubiquitination and subsequent degradation of FGFR1. Post-translationally, N-glycosylated in the endoplasmic reticulum. The N-glycan chains undergo further maturation to an Endo H-resistant form in the Golgi apparatus. Detected in astrocytoma, neuroblastoma and adrenal cortex cell lines. Some isoforms are detected in foreskin fibroblast cell lines, however isoform 17, isoform 18 and isoform 19 are not detected in these cells.

It is found in the cell membrane. The protein resides in the nucleus. Its subcellular location is the cytoplasm. The protein localises to the cytosol. It localises to the cytoplasmic vesicle. The catalysed reaction is L-tyrosyl-[protein] + ATP = O-phospho-L-tyrosyl-[protein] + ADP + H(+). Its activity is regulated as follows. Present in an inactive conformation in the absence of bound ligand. Ligand binding leads to dimerization and activation by sequential autophosphorylation on tyrosine residues. Inhibited by ARQ 069; this compound maintains the kinase in an inactive conformation and inhibits autophosphorylation. Inhibited by PD173074. Its function is as follows. Tyrosine-protein kinase that acts as a cell-surface receptor for fibroblast growth factors and plays an essential role in the regulation of embryonic development, cell proliferation, differentiation and migration. Required for normal mesoderm patterning and correct axial organization during embryonic development, normal skeletogenesis and normal development of the gonadotropin-releasing hormone (GnRH) neuronal system. Phosphorylates PLCG1, FRS2, GAB1 and SHB. Ligand binding leads to the activation of several signaling cascades. Activation of PLCG1 leads to the production of the cellular signaling molecules diacylglycerol and inositol 1,4,5-trisphosphate. Phosphorylation of FRS2 triggers recruitment of GRB2, GAB1, PIK3R1 and SOS1, and mediates activation of RAS, MAPK1/ERK2, MAPK3/ERK1 and the MAP kinase signaling pathway, as well as of the AKT1 signaling pathway. Promotes phosphorylation of SHC1, STAT1 and PTPN11/SHP2. In the nucleus, enhances RPS6KA1 and CREB1 activity and contributes to the regulation of transcription. FGFR1 signaling is down-regulated by IL17RD/SEF, and by FGFR1 ubiquitination, internalization and degradation. The protein is Fibroblast growth factor receptor 1 (FGFR1) of Homo sapiens (Human).